A 264-amino-acid polypeptide reads, in one-letter code: 3-methyl-2-oxobutanoate hydroxymethyltransferase (264 aa).

Residues aspartate 45 and aspartate 84 each contribute to the Mg(2+) site. Residues 45–46, aspartate 84, and lysine 112 contribute to the 3-methyl-2-oxobutanoate site; that span reads DS. Residue glutamate 114 participates in Mg(2+) binding. Glutamate 181 acts as the Proton acceptor in catalysis.

The protein belongs to the PanB family. As to quaternary structure, homodecamer; pentamer of dimers. It depends on Mg(2+) as a cofactor.

The protein localises to the cytoplasm. The catalysed reaction is 3-methyl-2-oxobutanoate + (6R)-5,10-methylene-5,6,7,8-tetrahydrofolate + H2O = 2-dehydropantoate + (6S)-5,6,7,8-tetrahydrofolate. The protein operates within cofactor biosynthesis; (R)-pantothenate biosynthesis; (R)-pantoate from 3-methyl-2-oxobutanoate: step 1/2. Its function is as follows. Catalyzes the reversible reaction in which hydroxymethyl group from 5,10-methylenetetrahydrofolate is transferred onto alpha-ketoisovalerate to form ketopantoate. This Cronobacter sakazakii (strain ATCC BAA-894) (Enterobacter sakazakii) protein is 3-methyl-2-oxobutanoate hydroxymethyltransferase.